The following is a 732-amino-acid chain: Catalase-peroxidase (732 aa).

The interval 1–29 (MTTESKCPFSGGGKPNTPRRGPSNQDWWP) is disordered. Positions 96 to 223 (WHSAGTYRIG…LAAVQMGLIY (128 aa)) form a cross-link, tryptophyl-tyrosyl-methioninium (Trp-Tyr) (with M-249). His97 functions as the Proton acceptor in the catalytic mechanism. The segment at residues 223–249 (YVNPEGPDGNPDPVAAARDIRETFARM) is a cross-link (tryptophyl-tyrosyl-methioninium (Tyr-Met) (with W-96)). Residue His264 coordinates heme b.

The protein belongs to the peroxidase family. Peroxidase/catalase subfamily. Homodimer or homotetramer. The cofactor is heme b. Post-translationally, formation of the three residue Trp-Tyr-Met cross-link is important for the catalase, but not the peroxidase activity of the enzyme.

The catalysed reaction is H2O2 + AH2 = A + 2 H2O. The enzyme catalyses 2 H2O2 = O2 + 2 H2O. Its function is as follows. Bifunctional enzyme with both catalase and broad-spectrum peroxidase activity. The protein is Catalase-peroxidase of Serratia proteamaculans (strain 568).